A 152-amino-acid polypeptide reads, in one-letter code: SsrA-binding protein (152 aa).

Belongs to the SmpB family.

The protein resides in the cytoplasm. In terms of biological role, required for rescue of stalled ribosomes mediated by trans-translation. Binds to transfer-messenger RNA (tmRNA), required for stable association of tmRNA with ribosomes. tmRNA and SmpB together mimic tRNA shape, replacing the anticodon stem-loop with SmpB. tmRNA is encoded by the ssrA gene; the 2 termini fold to resemble tRNA(Ala) and it encodes a 'tag peptide', a short internal open reading frame. During trans-translation Ala-aminoacylated tmRNA acts like a tRNA, entering the A-site of stalled ribosomes, displacing the stalled mRNA. The ribosome then switches to translate the ORF on the tmRNA; the nascent peptide is terminated with the 'tag peptide' encoded by the tmRNA and targeted for degradation. The ribosome is freed to recommence translation, which seems to be the essential function of trans-translation. This is SsrA-binding protein from Rickettsia felis (strain ATCC VR-1525 / URRWXCal2) (Rickettsia azadi).